The chain runs to 388 residues: Chorismate synthase (388 aa).

NADP(+) is bound by residues R39 and R45. FMN is bound by residues 130–132 (RSS), 251–252 (NA), G296, 311–315 (KPIPT), and R337.

This sequence belongs to the chorismate synthase family. As to quaternary structure, homotetramer. Requires FMNH2 as cofactor.

The catalysed reaction is 5-O-(1-carboxyvinyl)-3-phosphoshikimate = chorismate + phosphate. The protein operates within metabolic intermediate biosynthesis; chorismate biosynthesis; chorismate from D-erythrose 4-phosphate and phosphoenolpyruvate: step 7/7. Its function is as follows. Catalyzes the anti-1,4-elimination of the C-3 phosphate and the C-6 proR hydrogen from 5-enolpyruvylshikimate-3-phosphate (EPSP) to yield chorismate, which is the branch point compound that serves as the starting substrate for the three terminal pathways of aromatic amino acid biosynthesis. This reaction introduces a second double bond into the aromatic ring system. This is Chorismate synthase from Streptococcus pneumoniae (strain ATCC 700669 / Spain 23F-1).